The chain runs to 541 residues: MSKIIAYDEEARRGLERGLNALADAVKVTLGPKGRNVVLEKKWGAPTITNDGVSIAKEIELEDPYEKIGAELVKEVAKKTDDVAGDGTTTATVLAQALVREGLRNVAAGANPLGLKRGIEKAVEKVTETLLKSAKEVETKEQIAATAAISAGDTQIGELIAEAMDKVGNEGVITVEESNTFGLQLELTEGMRFDKGYISGYFVTDAERQEAVLEDPYILLVSSKVSTVKDLLPLLEKVIQAGKPLLIIAEDVEGEALSTLVVNKIRGTFKSVAVKAPGFGDRRKAMLQDIAILTGGQVVSEEVGLSLETADVALLGTARKVVVTKDETTIVEGAGDSDAIAGRVAQIRAEIENSDSDYDREKLQERLAKLAGGVAVIKAGAATEVELKERKHRIEDAVRNAKAAVEEGIVAGGGVALLQSAPSLDELNLTGDEATGANIVRVALSAPLKQIAFNGGLEPGVVAEKVTNLPAGHGLNAATGEYEDLLKAGVADPVKVTRSALQNAASIAALFLTTEAVVADKPEKAAAPAGDPTGGMGGMDF.

ATP contacts are provided by residues Thr-29–Pro-32, Asp-86–Thr-90, Gly-413, Asn-476–Ala-478, and Asp-492.

This sequence belongs to the chaperonin (HSP60) family. In terms of assembly, forms a cylinder of 14 subunits composed of two heptameric rings stacked back-to-back. Interacts with the co-chaperonin GroES.

It is found in the secreted. Its subcellular location is the capsule. The protein resides in the cell surface. It localises to the cell wall. It catalyses the reaction ATP + H2O + a folded polypeptide = ADP + phosphate + an unfolded polypeptide.. Functionally, together with its co-chaperonin GroES, plays an essential role in assisting protein folding. The GroEL-GroES system forms a nano-cage that allows encapsulation of the non-native substrate proteins and provides a physical environment optimized to promote and accelerate protein folding. In Mycolicibacterium vanbaalenii (strain DSM 7251 / JCM 13017 / BCRC 16820 / KCTC 9966 / NRRL B-24157 / PYR-1) (Mycobacterium vanbaalenii), this protein is Chaperonin GroEL 2.